A 69-amino-acid chain; its full sequence is Large ribosomal subunit protein uL29 (69 aa).

It belongs to the universal ribosomal protein uL29 family.

The polypeptide is Large ribosomal subunit protein uL29 (Oenococcus oeni (strain ATCC BAA-331 / PSU-1)).